Consider the following 480-residue polypeptide: Voltage-gated potassium channel regulatory subunit KCNG2 (480 aa).

Disordered stretches follow at residues 1-25 and 144-167; these read MARL…GRGG and AAEA…LGSG. The Cytoplasmic segment spans residues 1 to 187; that stretch reads MARLPGHPEV…DVVENPHSGL (187 aa). The chain crosses the membrane as a helical span at residues 188-209; sequence AGKLFAYVSVAFVAVTAVGLCL. Over 210 to 230 the chain is Extracellular; sequence STMPDVRAEEERGECSTKCRN. Residues 231–252 traverse the membrane as a helical segment; that stretch reads LFVLETVCVAWFSFEFLLRSLQ. Residues 253-263 are Cytoplasmic-facing; that stretch reads AESKCAFLRTP. The chain crosses the membrane as a helical span at residues 264–284; the sequence is LAIIDILAILPFYVSLLAGLA. The Extracellular segment spans residues 285 to 296; it reads AGPTGSKMLERA. The chain crosses the membrane as a helical; Voltage-sensor span at residues 297–317; it reads GLVLRLLRALRVLYVMRLARH. Topologically, residues 318–332 are cytoplasmic; that stretch reads SLGLRSLGLTVRRCA. Residues 333–354 traverse the membrane as a helical segment; that stretch reads REFGLLLLFLCVAMALFAPLVH. The Extracellular portion of the chain corresponds to 355–369; sequence LAERELGAHRDFSSV. Residues 370–381 constitute an intramembrane region (helical); it reads PASYWWAVISMT. Residues 382 to 387 carry the Selectivity filter motif; sequence TVGYGD. Residues 382 to 389 lie within the membrane without spanning it; it reads TVGYGDMV. At 390 to 396 the chain is on the extracellular side; it reads PRSLPGQ. A helical membrane pass occupies residues 397–425; that stretch reads VVALSSILSGILLMAFPVTSIFHTFSRSY. The Cytoplasmic portion of the chain corresponds to 426-480; that stretch reads SELKEQQQRAASPEPVLREDSTRDDSTRSASATEDSSQDPETAGAAGSLPGPVGP. A disordered region spans residues 429 to 480; the sequence is KEQQQRAASPEPVLREDSTRDDSTRSASATEDSSQDPETAGAAGSLPGPVGP. The span at 441–452 shows a compositional bias: basic and acidic residues; it reads VLREDSTRDDST.

It belongs to the potassium channel family. G (TC 1.A.1.2) subfamily. Kv6.2/KCNG2 sub-subfamily. As to quaternary structure, heterodimer with KCNB1. In terms of tissue distribution, highly expressed in heart, in particular in right and left atrium, and detected at lower levels in the right and left ventricle.

It is found in the cell membrane. Regulatory alpha-subunit of the voltage-gated potassium (Kv) channel which, when coassembled with KCNB1, can modulate the kinetics and conductance-voltage relationship. Modulates channel activity by shifting the threshold and the half-maximal activation to more negative values. Potassium channel subunit that does not form functional channels by itself. The polypeptide is Voltage-gated potassium channel regulatory subunit KCNG2 (Rattus norvegicus (Rat)).